Reading from the N-terminus, the 278-residue chain is HTH-type transcriptional activator RhaS (278 aa).

The HTH araC/xylS-type domain maps to 174–272; that stretch reads NLLLAWLEDH…NWSPRDIRQG (99 aa). 2 DNA-binding regions (H-T-H motif) span residues 191 to 212 and 239 to 262; these read DAVA…KQQT and VTDI…RREF.

As to quaternary structure, binds DNA as a dimer.

It is found in the cytoplasm. Functionally, activates expression of the rhaBAD and rhaT operons. This is HTH-type transcriptional activator RhaS from Shigella flexneri serotype 5b (strain 8401).